The primary structure comprises 316 residues: Olfactory receptor class A-like protein 1 (316 aa).

Topologically, residues 1–8 (MDLCVTIK) are extracellular. A helical transmembrane segment spans residues 9 to 29 (GVSFLLQAGLGILANALVLLA). Topologically, residues 30–39 (YAHIRLAEAR) are cytoplasmic. A helical transmembrane segment spans residues 40–60 (LQPVDAILCHLALVDLLLLLT). Residues 61-97 (RGVPQTMTVFGMRNLLDDTGCKVVIYTYRIARALSVC) are Extracellular-facing. An intrachain disulfide couples Cys81 to Cys169. A helical transmembrane segment spans residues 98-118 (ITCMLSVFQAVTVAPAAGPLL). At 119 to 132 (SGVKARLPQLLAPT) the chain is on the cytoplasmic side. A helical membrane pass occupies residues 133-153 (FAALWFINMAVCIAAPFFSVA). Residues 154 to 187 (PRNGTVPPFTLNLGFCHVDFHDNLSYVLNGVAVS) lie on the Extracellular side of the membrane. 2 N-linked (GlcNAc...) asparagine glycosylation sites follow: Asn156 and Asn176. Residues 188-208 (VRDFAFVGAMLASSGFILLLL) traverse the membrane as a helical segment. Topologically, residues 209 to 233 (HRHRRQVRAVRRSQGSTMETRAART) are cytoplasmic. The chain crosses the membrane as a helical span at residues 234–254 (VLMLVILYSVFFGIDNVIWIY). Residues 255–264 (MLTVAQVPPV) lie on the Extracellular side of the membrane. The chain crosses the membrane as a helical span at residues 265 to 285 (VADMRVFFSSCYASLSPFLII). The Cytoplasmic portion of the chain corresponds to 286-316 (SSNRKLKARMVCATSEQERQAEDGKNSSGKN).

It belongs to the G-protein coupled receptor 1 family. Highly expressed in the olfactory rosette where it localizes to a subset of olfactory sensory neurons, mainly in the apical region of the neuroepithelium. Not detected in other tissues tested.

The protein resides in the cell membrane. Its function is as follows. Probable pheromone receptor. Shows high specificity for 4-hydroxyphenylacetic acid. Activation of the receptor stimulates intracellular calcium release. The protein is Olfactory receptor class A-like protein 1 of Danio rerio (Zebrafish).